The sequence spans 160 residues: Putative pre-16S rRNA nuclease (160 aa).

Belongs to the YqgF nuclease family.

The protein localises to the cytoplasm. Could be a nuclease involved in processing of the 5'-end of pre-16S rRNA. The polypeptide is Putative pre-16S rRNA nuclease (Jannaschia sp. (strain CCS1)).